We begin with the raw amino-acid sequence, 588 residues long: Glutamate--tRNA ligase (588 aa).

Residues 112–122 (PNPDFYLHLGS) carry the 'HIGH' region motif.

The protein belongs to the class-I aminoacyl-tRNA synthetase family. Glutamate--tRNA ligase type 2 subfamily.

It localises to the cytoplasm. It catalyses the reaction tRNA(Glu) + L-glutamate + ATP = L-glutamyl-tRNA(Glu) + AMP + diphosphate. In terms of biological role, catalyzes the attachment of glutamate to tRNA(Glu) in a two-step reaction: glutamate is first activated by ATP to form Glu-AMP and then transferred to the acceptor end of tRNA(Glu). The protein is Glutamate--tRNA ligase of Caldivirga maquilingensis (strain ATCC 700844 / DSM 13496 / JCM 10307 / IC-167).